Here is a 157-residue protein sequence, read N- to C-terminus: Phosphopantetheine adenylyltransferase (157 aa).

A substrate-binding site is contributed by Thr10. ATP-binding positions include 10 to 11 and His18; that span reads TF. Substrate contacts are provided by Lys42, Leu74, and Arg88. ATP contacts are provided by residues 89-91, Glu99, and 124-130; these read GLR and NAFISSS.

The protein belongs to the bacterial CoaD family. Homohexamer. Mg(2+) serves as cofactor.

Its subcellular location is the cytoplasm. The enzyme catalyses (R)-4'-phosphopantetheine + ATP + H(+) = 3'-dephospho-CoA + diphosphate. Its pathway is cofactor biosynthesis; coenzyme A biosynthesis; CoA from (R)-pantothenate: step 4/5. Tightly binds to CoA, which is presumably a feedback inhibitor. Potently inhibited by D-amethopterin, which simultaneously occupies the 4'-phosphopantetheine- and ATP-binding sites; following treatment with D-amethopterin, H.pylori exhibits morphological characteristics associated with cell death, showing that D-amethopterin displays antimicrobial activity. Reversibly transfers an adenylyl group from ATP to 4'-phosphopantetheine, yielding dephospho-CoA (dPCoA) and pyrophosphate. In Helicobacter pylori (strain ATCC 700392 / 26695) (Campylobacter pylori), this protein is Phosphopantetheine adenylyltransferase.